We begin with the raw amino-acid sequence, 207 residues long: Ribosomal RNA small subunit methyltransferase G (207 aa).

Residues Gly-73, Leu-78, 124-125 (VE), and Arg-139 contribute to the S-adenosyl-L-methionine site.

It belongs to the methyltransferase superfamily. RNA methyltransferase RsmG family.

It localises to the cytoplasm. The catalysed reaction is guanosine(527) in 16S rRNA + S-adenosyl-L-methionine = N(7)-methylguanosine(527) in 16S rRNA + S-adenosyl-L-homocysteine. Functionally, specifically methylates the N7 position of guanine in position 527 of 16S rRNA. The sequence is that of Ribosomal RNA small subunit methyltransferase G from Escherichia coli O1:K1 / APEC.